Reading from the N-terminus, the 144-residue chain is uncharacterized protein (144 aa).

A helical transmembrane segment spans residues 72–90 (VAIGTSLIVGAGVAMEVSV).

This sequence to yeast YCL21w.

The protein localises to the membrane. This is an uncharacterized protein from Saccharomyces cerevisiae (strain ATCC 204508 / S288c) (Baker's yeast).